Here is an 828-residue protein sequence, read N- to C-terminus: Periplasmic nitrate reductase (828 aa).

Positions methionine 1–alanine 31 form a signal peptide, tat-type signal. One can recognise a 4Fe-4S Mo/W bis-MGD-type domain in the interval isoleucine 39–aspartate 95. Cysteine 46, cysteine 49, cysteine 53, and cysteine 81 together coordinate [4Fe-4S] cluster. Mo-bis(molybdopterin guanine dinucleotide)-binding positions include lysine 83, glutamine 150, asparagine 175, cysteine 179, tryptophan 212 to methionine 219, serine 243 to histidine 247, glutamine 262 to aspartate 264, methionine 372, glutamine 376, asparagine 482, serine 508 to aspartate 509, lysine 531, aspartate 558, and threonine 718 to threonine 727. Position 794 (phenylalanine 794) interacts with substrate. Mo-bis(molybdopterin guanine dinucleotide) contacts are provided by asparagine 802 and lysine 819.

The protein belongs to the prokaryotic molybdopterin-containing oxidoreductase family. NasA/NapA/NarB subfamily. In terms of assembly, component of the periplasmic nitrate reductase NapAB complex composed of NapA and NapB. [4Fe-4S] cluster serves as cofactor. The cofactor is Mo-bis(molybdopterin guanine dinucleotide). In terms of processing, predicted to be exported by the Tat system. The position of the signal peptide cleavage has not been experimentally proven.

It is found in the periplasm. It catalyses the reaction 2 Fe(II)-[cytochrome] + nitrate + 2 H(+) = 2 Fe(III)-[cytochrome] + nitrite + H2O. In terms of biological role, catalytic subunit of the periplasmic nitrate reductase complex NapAB. Receives electrons from NapB and catalyzes the reduction of nitrate to nitrite. This chain is Periplasmic nitrate reductase, found in Escherichia coli O1:K1 / APEC.